We begin with the raw amino-acid sequence, 144 residues long: Large ribosomal subunit protein uL11 (144 aa).

The protein belongs to the universal ribosomal protein uL11 family. In terms of assembly, part of the ribosomal stalk of the 50S ribosomal subunit. Interacts with L10 and the large rRNA to form the base of the stalk. L10 forms an elongated spine to which L12 dimers bind in a sequential fashion forming a multimeric L10(L12)X complex. One or more lysine residues are methylated.

Functionally, forms part of the ribosomal stalk which helps the ribosome interact with GTP-bound translation factors. The polypeptide is Large ribosomal subunit protein uL11 (Streptomyces avermitilis (strain ATCC 31267 / DSM 46492 / JCM 5070 / NBRC 14893 / NCIMB 12804 / NRRL 8165 / MA-4680)).